A 159-amino-acid polypeptide reads, in one-letter code: Riboflavin kinase (159 aa).

38-43 (GLGEGR) provides a ligand contact to CDP. Residues Thr67 and Asn69 each contribute to the Mg(2+) site. Residues Thr126 and Glu134 each coordinate FMN. Position 139 to 142 (139 to 142 (HKLR)) interacts with CDP.

Belongs to the archaeal riboflavin kinase family. The cofactor is Mg(2+).

The catalysed reaction is riboflavin + CTP = CDP + FMN + H(+). Its pathway is cofactor biosynthesis; FMN biosynthesis; FMN from riboflavin (CTP route): step 1/1. Functionally, catalyzes the CTP-dependent phosphorylation of riboflavin (vitamin B2) to form flavin mononucleotide (FMN). This Sulfolobus acidocaldarius (strain ATCC 33909 / DSM 639 / JCM 8929 / NBRC 15157 / NCIMB 11770) protein is Riboflavin kinase.